The primary structure comprises 356 residues: NADH-quinone oxidoreductase subunit H (356 aa).

Helical transmembrane passes span 22-42, 59-79, 93-113, 124-144, 171-191, 198-218, 240-260, 285-305, and 321-341; these read GVVS…TAYL, PSLA…KLVF, FIIA…VIPI, IGGI…IIIA, MALS…IQIV, PIWL…SILA, VEYS…NMIL, IPGY…FLWI, and GLKV…TILV.

The protein belongs to the complex I subunit 1 family. In terms of assembly, NDH-1 is composed of 14 different subunits. Subunits NuoA, H, J, K, L, M, N constitute the membrane sector of the complex.

It localises to the cell inner membrane. It catalyses the reaction a quinone + NADH + 5 H(+)(in) = a quinol + NAD(+) + 4 H(+)(out). NDH-1 shuttles electrons from NADH, via FMN and iron-sulfur (Fe-S) centers, to quinones in the respiratory chain. The immediate electron acceptor for the enzyme in this species is believed to be ubiquinone. Couples the redox reaction to proton translocation (for every two electrons transferred, four hydrogen ions are translocated across the cytoplasmic membrane), and thus conserves the redox energy in a proton gradient. This subunit may bind ubiquinone. The chain is NADH-quinone oxidoreductase subunit H from Orientia tsutsugamushi (strain Boryong) (Rickettsia tsutsugamushi).